The following is a 163-amino-acid chain: MMKPSNISISAVKLPQDLDDFKMLVQEYLQEFGMDLTFQNVDDELANPMRKYGPPHGIMLVARDEHGTALGCVAVHPFGGPGCCEMKRLYVRPESRGLKLGVLLVKEIIQYSEKLGYSSMVLDTLDTLLPAVRLYKSFGFKTTEPYYHNPIPNVVYMRLEMSK.

In terms of domain architecture, N-acetyltransferase spans 7–162 (ISISAVKLPQ…NVVYMRLEMS (156 aa)).

The protein belongs to the acetyltransferase family.

It is found in the cytoplasm. It localises to the nucleus. This is an uncharacterized protein from Schizosaccharomyces pombe (strain 972 / ATCC 24843) (Fission yeast).